Here is a 1238-residue protein sequence, read N- to C-terminus: MINVNTKWTETQKSAIFTPNCNLLVAAGAGTGKTAVLVERILQKVINDSEEVDIDKLLVVTFTNAAASEMKERVGEALSKLLELNCTSKNLQRQLALLNQSNIMTIHSFCLKVIKNNFHRIDLDPNFRICDDTESKLLKQDALLELFEEKYEEENLGFLNLADGYGGKNDSKLQDIVLSLYEFSQGSPWPKRWLQDVLKDFNLGSDFDFGDTKWAKVLMHNVTVELKGCKNKMKNILNTIENIEGLEHYLEPFKSDIESIDKLINITTWDEIRDEFIKLSFNKLPSKRTDPLVKSYKDKARNTRDEVKKKLISIREDIILCTDDIYENFKEVYPLMKSLTFLVMDFYEKYHNKKSERNMIDFNDIEHFCLEILTSKDKNGDIIPSEAALEYREYFEEIFIDEYQDSNEVQEVIMNMISRKNIYANLFMVGDVKQSIYRFRQARPELFLEKYNSYDEKEGSKNRKIKLSENFRSRKEIIDAINYIFKQIMCREVGELDYGEEECLKSSARYEPFEGNCGGDVELHVVDKKENENKLEDENEEELLDAISVEARLVASKINELVNPSLDQYSFKVYDKEIDNYRSIMYKDIVILMRATQNWAPAFVEELNNSGIPVFADTSVGYFQAIEIKTIISLLQIIDNPLQDIPFIALLRSPIGGFSPEDLIDLRVVNREISFYEILKAIKEHSLELKYSLEHIDERLEYKVEQFFNKLCLWRRKVIHMPIDEFIWHIYIETGYYGFVGAMPGGIQRQANLRMLFERAKQYKNISYKGLFNFINFINKLKSSSTDMGNAKILGENENVVRIMSIHKSKGLEFPVIILSGAGKRFNLTDINKSVLFHKELGLGPEYVNSERHISYPTIVKQVLKRKLKMETLSEEMRILYVAFTRAKEKLIITGTVDNIENTFQRWCEAAYCEEDKLPEYSLINSRNFLDWIGPAVARHPCGEIIRKVCPFEYNLNLITGDDSKWKVFVYSKDNFKSTLDENIDEDIIGKIKSLELDNNKEIYKNEVYRRLNWTYKYEQSSKIAAKFSVSELKRRFKLIDTENGIEFMEPIYLKKPAFLRESKGLTPSERGIVMHLVMQHIDIDKVGSYEQIKEQVDKLVFREFITEAEAKSISVYKIIKFFNSEIGIRMKKSNNVYREVPFYMEIESTELYKQLPQHIYRDEKVLIQGIIDCYFEENNELILVDYKTDHVGDIDSIKEKYQVQIYYYGRALEKLTGKKVKKKYLYLFSKDYILDLS.

The 469-residue stretch at 6–474 (TKWTETQKSA…IKLSENFRSR (469 aa)) folds into the UvrD-like helicase ATP-binding domain. 27 to 34 (AGAGTGKT) serves as a coordination point for ATP. In terms of domain architecture, UvrD-like helicase C-terminal spans 512–811 (PFEGNCGGDV…RIMSIHKSKG (300 aa)).

The protein belongs to the helicase family. AddA subfamily. In terms of assembly, heterodimer of AddA and AddB/RexB. It depends on Mg(2+) as a cofactor.

The enzyme catalyses Couples ATP hydrolysis with the unwinding of duplex DNA by translocating in the 3'-5' direction.. It catalyses the reaction ATP + H2O = ADP + phosphate + H(+). In terms of biological role, the heterodimer acts as both an ATP-dependent DNA helicase and an ATP-dependent, dual-direction single-stranded exonuclease. Recognizes the chi site generating a DNA molecule suitable for the initiation of homologous recombination. The AddA nuclease domain is required for chi fragment generation; this subunit has the helicase and 3' -&gt; 5' nuclease activities. This Clostridium kluyveri (strain NBRC 12016) protein is ATP-dependent helicase/nuclease subunit A.